The primary structure comprises 648 residues: Penicillin-binding protein PbpB (648 aa).

The tract at residues 1 to 35 is disordered; the sequence is MSRRGDRPRTPAQPRKKARVDQPRSARTRRTRVSE. A helical transmembrane segment spans residues 52–72; the sequence is GNLAILAVLVIAAVQLFMLQV. Catalysis depends on Ser-355, which acts as the Acyl-ester intermediate.

This sequence belongs to the transpeptidase family. Interacts with Wag31.

It is found in the cell membrane. The chain is Penicillin-binding protein PbpB (pbpB) from Mycolicibacterium smegmatis (strain ATCC 700084 / mc(2)155) (Mycobacterium smegmatis).